Reading from the N-terminus, the 71-residue chain is UPF0434 protein Meso_3270 (71 aa).

It belongs to the UPF0434 family.

The chain is UPF0434 protein Meso_3270 from Chelativorans sp. (strain BNC1).